A 472-amino-acid chain; its full sequence is Argininosuccinate lyase (472 aa).

It belongs to the lyase 1 family. Argininosuccinate lyase subfamily.

It localises to the cytoplasm. It carries out the reaction 2-(N(omega)-L-arginino)succinate = fumarate + L-arginine. It participates in amino-acid biosynthesis; L-arginine biosynthesis; L-arginine from L-ornithine and carbamoyl phosphate: step 3/3. This Polynucleobacter necessarius subsp. necessarius (strain STIR1) protein is Argininosuccinate lyase.